The following is a 634-amino-acid chain: SPARC-like protein 1 (634 aa).

Positions 1-16 (MKAVLLLLYALGIAAA) are cleaved as a signal peptide. The segment at 50–335 (ADIEKHPNHK…DDSKHGASDD (286 aa)) is disordered. Positions 51 to 62 (DIEKHPNHKAEK) are enriched in basic and acidic residues. A phosphoserine mark is found at serine 68, serine 76, and serine 84. Basic and acidic residues predominate over residues 73–83 (HEQSTEQDKTY). Over residues 89–99 (LKDEEDGDGDL) the composition is skewed to acidic residues. Polar residues predominate over residues 131-144 (TVSTPFVDSDQPAN). Asparagine 144 is a glycosylation site (N-linked (GlcNAc...) asparagine). Serine 151 and serine 159 each carry phosphoserine. Acidic residues-rich tracts occupy residues 189–198 (EKEEEEDPED) and 205–214 (NQEEEKEPPE). A compositionally biased stretch (polar residues) spans 233–258 (QESSQPTQISKTKNDFEQGSQGQEGD). Phosphoserine is present on serine 259. 2 stretches are compositionally biased toward basic and acidic residues: residues 263-276 (GEDKAAGSKEHLPH) and 292-303 (GNRKDTDEEKAV). A phosphoserine mark is found at serine 333 and serine 340. The segment at 360–398 (EETPDESENRSEAGDNQGAKKAESSPNAEPSDEGNSRGH) is disordered. Positions 366-382 (SENRSEAGDNQGAKKAE) are enriched in basic and acidic residues. N-linked (GlcNAc...) asparagine glycosylation is present at asparagine 368. Phosphoserine is present on residues serine 370 and serine 390. One can recognise a Follistatin-like domain in the interval 402 to 424 (SCMNFQCKRGHTCKTDQHGKPHC). 7 cysteine pairs are disulfide-bonded: cysteine 403–cysteine 414, cysteine 408–cysteine 424, cysteine 426–cysteine 460, cysteine 432–cysteine 453, cysteine 442–cysteine 479, cysteine 485–cysteine 596, and cysteine 604–cysteine 620. The Kazal-like domain occupies 420–481 (GKPHCVCQDP…QLDYFGACKS (62 aa)). An N-linked (GlcNAc...) asparagine glycan is attached at asparagine 446. The EF-hand domain occupies 592-627 (PMEHCITRFFEECDPNKDKHITLKEWGHCFGIKEED). Ca(2+) contacts are provided by aspartate 605, asparagine 607, aspartate 609, histidine 611, and glutamate 616.

The protein belongs to the SPARC family. In terms of tissue distribution, expressed in many types of neurons in the brain.

The protein localises to the secreted. Its subcellular location is the extracellular space. The protein resides in the extracellular matrix. The sequence is that of SPARC-like protein 1 (Sparcl1) from Rattus norvegicus (Rat).